The sequence spans 380 residues: O-phospho-L-seryl-tRNA:Cys-tRNA synthase (380 aa).

Pyridoxal 5'-phosphate is bound by residues 86 to 87 (AR), Asn-192, and 215 to 217 (SGH). Lys-218 carries the N6-(pyridoxal phosphate)lysine modification.

Belongs to the SepCysS family. In terms of assembly, homodimer. Interacts with SepRS. Pyridoxal 5'-phosphate serves as cofactor.

The catalysed reaction is O-phospho-L-seryl-tRNA(Cys) + hydrogen sulfide + H(+) = L-cysteinyl-tRNA(Cys) + phosphate. Functionally, converts O-phospho-L-seryl-tRNA(Cys) (Sep-tRNA(Cys)) to L-cysteinyl-tRNA(Cys) (Cys-tRNA(Cys)). The sequence is that of O-phospho-L-seryl-tRNA:Cys-tRNA synthase from Methanococcus maripaludis (strain C5 / ATCC BAA-1333).